We begin with the raw amino-acid sequence, 310 residues long: Isoflavone reductase homolog P3 (310 aa).

Residues 12–18 (GGTGYIG), R37, and K46 contribute to the NADP(+) site. K134 serves as the catalytic Proton acceptor. R138 lines the NADP(+) pocket.

The protein belongs to the NmrA-type oxidoreductase family. Isoflavone reductase subfamily.

The protein localises to the cytoplasm. This is Isoflavone reductase homolog P3 from Arabidopsis thaliana (Mouse-ear cress).